The chain runs to 467 residues: Abscisic acid 8'-hydroxylase 1 (467 aa).

The helical transmembrane segment at 5–24 (ALFLTLFAGSLFLYFLRCLI) threads the bilayer. Cys411 serves as a coordination point for heme.

This sequence belongs to the cytochrome P450 family. Heme is required as a cofactor. As to expression, mainly expressed in flowers, siliques, roots and stems. Lower expression in rosette leaves and dry seeds. Expressed in vascular tissues of embryo during the seed development.

It is found in the membrane. The enzyme catalyses 2-cis-(+)-abscisate + reduced [NADPH--hemoprotein reductase] + O2 = (+)-8'-hydroxyabscisate + oxidized [NADPH--hemoprotein reductase] + H2O + H(+). The protein operates within plant hormone degradation; abscisic acid degradation. In terms of biological role, involved in the oxidative degradation of abscisic acid. Plays an important role in determining abscisic acid levels in dry seeds and in the control of postgermination growth. The polypeptide is Abscisic acid 8'-hydroxylase 1 (CYP707A1) (Arabidopsis thaliana (Mouse-ear cress)).